The sequence spans 197 residues: Probable nicotinate-nucleotide adenylyltransferase (197 aa).

It belongs to the NadD family.

It carries out the reaction nicotinate beta-D-ribonucleotide + ATP + H(+) = deamido-NAD(+) + diphosphate. It participates in cofactor biosynthesis; NAD(+) biosynthesis; deamido-NAD(+) from nicotinate D-ribonucleotide: step 1/1. Its function is as follows. Catalyzes the reversible adenylation of nicotinate mononucleotide (NaMN) to nicotinic acid adenine dinucleotide (NaAD). This Pseudothermotoga lettingae (strain ATCC BAA-301 / DSM 14385 / NBRC 107922 / TMO) (Thermotoga lettingae) protein is Probable nicotinate-nucleotide adenylyltransferase.